The chain runs to 122 residues: uncharacterized protein (122 aa).

Thr55 bears the Phosphothreonine mark. Phosphoserine occurs at positions 72, 86, 96, 112, and 118.

The protein resides in the cytoplasm. This is an uncharacterized protein from Homo sapiens (Human).